Reading from the N-terminus, the 697-residue chain is Sialic acid-binding Ig-like lectin 10 (697 aa).

The first 16 residues, 1-16, serve as a signal peptide directing secretion; that stretch reads MLLPLLLSSLLGGSQA. The Extracellular segment spans residues 17 to 550; sequence MDGRFWIRVQ…KGLISTAFSN (534 aa). Residues 18–121 form the Ig-like V-type domain; the sequence is DGRFWIRVQE…DESQYFFRVE (104 aa). 4 disulfides stabilise this stretch: Cys36–Cys173, Cys41–Cys101, Cys164–Cys215, and Cys276–Cys323. A glycan (N-linked (GlcNAc...) asparagine) is linked at Asn100. Arg119 contributes to the N-acetylneuraminate binding site. Ig-like C2-type domains are found at residues 146-231, 251-339, and 344-441; these read PDVY…RTVR, PALE…LDLS, and PENL…LSLS. N-linked (GlcNAc...) asparagine glycans are attached at residues Asn355 and Asn364. Cys380 and Cys425 are joined by a disulfide. N-linked (GlcNAc...) asparagine glycans are attached at residues Asn486 and Asn504. A helical membrane pass occupies residues 551–571; the sequence is GAFLGIGITALLFLCLALIIM. The Cytoplasmic portion of the chain corresponds to 572–697; sequence KILPKRRTQT…QADYAEVKFQ (126 aa). The ITIM motif 1 signature appears at 595 to 600; sequence LDYINV. Residues 606 to 697 are disordered; the sequence is PLAQKRNQKA…QADYAEVKFQ (92 aa). Pro residues predominate over residues 620 to 629; the sequence is PRTPLPPGAP. Polar residues predominate over residues 650–659; the sequence is KSSTQAPESQ. The ITIM motif 2 motif lies at 665–670; it reads LHYATL. Tyr667 carries the phosphotyrosine modification.

This sequence belongs to the immunoglobulin superfamily. SIGLEC (sialic acid binding Ig-like lectin) family. In terms of assembly, interacts with PTPN6/SHP-1 upon phosphorylation. Interacts with NCF1. Interacts with CD24; the probable CD24:SIGLEC10 complex is proposed to inhibit HGMB1-mediated tissue damage immune response. Interacts with HMGB1; the interaction is dependent on CD24. Interacts with RIGI, CBL and PTPN11. Phosphorylation of Tyr-667 is involved in binding to PTPN6. In terms of tissue distribution, expressed by peripheral blood leukocytes (eosinophils, monocytes and a natural killer cell subpopulation). Isoform 5 is found to be the most abundant isoform. Found in lymph node, lung, ovary and appendix. Isoform 1 is found at high levels and isoform 2 at lower levels in bone marrow, spleen and spinal cord. Isoform 2 is also found in brain. Isoform 4 is specifically found in natural killer cells.

Its subcellular location is the cell membrane. It localises to the secreted. Putative adhesion molecule that mediates sialic-acid dependent binding to cells. Preferentially binds to alpha-2,3- or alpha-2,6-linked sialic acid. The sialic acid recognition site may be masked by cis interactions with sialic acids on the same cell surface. In the immune response, seems to act as an inhibitory receptor upon ligand induced tyrosine phosphorylation by recruiting cytoplasmic phosphatase(s) via their SH2 domain(s) that block signal transduction through dephosphorylation of signaling molecules. Involved in negative regulation of B-cell antigen receptor signaling. The inhibition of B cell activation is dependent on PTPN6/SHP-1. In association with CD24 may be involved in the selective suppression of the immune response to danger-associated molecular patterns (DAMPs) such as HMGB1, HSP70 and HSP90. In association with CD24 may regulate the immune repsonse of natural killer (NK) cells. Plays a role in the control of autoimmunity. During initiation of adaptive immune responses by CD8-alpha(+) dendritic cells inhibits cross-presentation by impairing the formation of MHC class I-peptide complexes. The function seems to implicate recruitment of PTPN6/SHP-1, which dephosphorylates NCF1 of the NADPH oxidase complex consequently promoting phagosomal acidification. The chain is Sialic acid-binding Ig-like lectin 10 (SIGLEC10) from Homo sapiens (Human).